We begin with the raw amino-acid sequence, 448 residues long: N-succinylarginine dihydrolase (448 aa).

Substrate contacts are provided by residues 19 to 28, Asn-110, and 137 to 138; these read GGLSYGNVAS and HR. Glu-174 is a catalytic residue. Position 214 (Arg-214) interacts with substrate. Residue His-250 is part of the active site. The substrate site is built by Asp-252 and Asn-365. Residue Cys-371 is the Nucleophile of the active site.

It belongs to the succinylarginine dihydrolase family. In terms of assembly, homodimer.

It carries out the reaction N(2)-succinyl-L-arginine + 2 H2O + 2 H(+) = N(2)-succinyl-L-ornithine + 2 NH4(+) + CO2. Its pathway is amino-acid degradation; L-arginine degradation via AST pathway; L-glutamate and succinate from L-arginine: step 2/5. In terms of biological role, catalyzes the hydrolysis of N(2)-succinylarginine into N(2)-succinylornithine, ammonia and CO(2). This is N-succinylarginine dihydrolase from Ectopseudomonas mendocina (strain ymp) (Pseudomonas mendocina).